A 1042-amino-acid chain; its full sequence is Isoleucine--tRNA ligase (1042 aa).

Positions 48–58 (PFATGLPHFGH) match the 'HIGH' region motif. The 'KMSKS' region motif lies at 594-598 (KMSKS). Residue Lys597 participates in ATP binding.

It belongs to the class-I aminoacyl-tRNA synthetase family. IleS type 2 subfamily. As to quaternary structure, monomer. Zn(2+) serves as cofactor.

It is found in the cytoplasm. The enzyme catalyses tRNA(Ile) + L-isoleucine + ATP = L-isoleucyl-tRNA(Ile) + AMP + diphosphate. In terms of biological role, catalyzes the attachment of isoleucine to tRNA(Ile). As IleRS can inadvertently accommodate and process structurally similar amino acids such as valine, to avoid such errors it has two additional distinct tRNA(Ile)-dependent editing activities. One activity is designated as 'pretransfer' editing and involves the hydrolysis of activated Val-AMP. The other activity is designated 'posttransfer' editing and involves deacylation of mischarged Val-tRNA(Ile). The sequence is that of Isoleucine--tRNA ligase from Borreliella burgdorferi (strain ZS7) (Borrelia burgdorferi).